The following is a 373-amino-acid chain: Protein translocase subunit SecF (373 aa).

6 consecutive transmembrane segments (helical) span residues 26–46 (IWYG…AVRG), 142–162 (WQGL…AFEW), 166–186 (LAAF…YALV), 193–213 (GTVI…VVVF), 251–271 (VVAL…LGAG), and 280–300 (LFVG…PLVA). Over residues 322 to 332 (QGAAKGESAES) the composition is skewed to low complexity. Residues 322–373 (QGAAKGESAESAADEGAYDADEPDDAAPAVVGPRNQPASRGRGRGRPSGKRR) are disordered. The span at 333 to 346 (AADEGAYDADEPDD) shows a compositional bias: acidic residues. Residues 362 to 373 (GRGRGRPSGKRR) are compositionally biased toward basic residues.

This sequence belongs to the SecD/SecF family. SecF subfamily. Forms a complex with SecD. Part of the essential Sec protein translocation apparatus which comprises SecA, SecYEG and auxiliary proteins SecDF. Other proteins may also be involved.

The protein resides in the cell membrane. Part of the Sec protein translocase complex. Interacts with the SecYEG preprotein conducting channel. SecDF uses the proton motive force (PMF) to complete protein translocation after the ATP-dependent function of SecA. The chain is Protein translocase subunit SecF from Streptomyces coelicolor (strain ATCC BAA-471 / A3(2) / M145).